Reading from the N-terminus, the 699-residue chain is Protein Scribble homolog let-413 (699 aa).

LRR repeat units follow at residues 37–59 (KLED…FSLR), 60–81 (HLRI…IGNL), 83–104 (QLIE…MQNC), 106–127 (LLTT…ICEC), 129–150 (SITI…IGSL), 152–174 (NLRV…VELR), 175–196 (KLEE…IGKL), 198–219 (SLRE…ISGC), 221–242 (MLDQ…LGRM), 244–265 (NLTD…FGEL), 267–288 (RLQM…IGKC), 290–311 (SLTE…IGDL), 313–334 (QLTT…IGNC), 336–357 (SLTV…IGKC), 359–380 (NLTV…VKVL), and 382–403 (KLQA…SETR). In terms of domain architecture, PDZ spans 584–665 (AGGTSNDPAP…RSPSPVSRTS (82 aa)). Residues 656–699 (RSPSPVSRTSEPSLNGSSHQLNHFDAGSPDSTMFVTSSTPVYAS) form a disordered region. Composition is skewed to polar residues over residues 659–676 (SPVS…SHQL) and 684–699 (PDST…VYAS).

The protein belongs to the LAP (LRR and PDZ) protein family. In terms of tissue distribution, expressed in the terminal web of the intestine. Expressed in seam cells. Expressed in the basolateral surfaces of epithelia and the nervous system. Expressed in the intestine, epidermis, excretory canal, reproductive system including vulva, uterus and spermatheca, in both larval and adult stage animals.

It localises to the basolateral cell membrane. In terms of biological role, critical role in assembling adherens junctions; adapter protein involved in polarizing protein trafficking in epithelial cells. Necessary to maintain, not establish, the entire terminal web (organelle-depleted, intermediate filament-rich layer of cytoplasm that underlies the apical microvilli of polarized epithelial cells) or brush border assembly at the apical surface gut cells. Required for correct localization of ifb-2 intermediate filaments in the terminal web. Required for dlg-1 and hmr-1 lateral localization. Maintains cell polarity by correctly positioning adherens junction protein components including ajm-1 and hmp-1 at discrete subapical positions. Plays a role in the correct localization of the dlg-1-ajm-1 complex, polarity protein par-3, and actin microfilament to the apical junction of spermatheca cells, and is required for ovulation. Regulates the establishment of newly-formed epithelia in conjunction with dlg-1. Required in the epidermis during larval development. Plays a role in cellular junction integrity and in the directed outgrowth of seam cells, towards neighboring seam cells, during larval development; probably acts by promoting the assembly and stability of dlg-1 at apical junctions. The sequence is that of Protein Scribble homolog let-413 from Caenorhabditis elegans.